Reading from the N-terminus, the 387-residue chain is 3-ketoacyl-CoA thiolase (387 aa).

C91 functions as the Acyl-thioester intermediate in the catalytic mechanism. Active-site proton acceptor residues include H343 and C373.

This sequence belongs to the thiolase-like superfamily. Thiolase family. Heterotetramer of two alpha chains (FadB) and two beta chains (FadA).

The protein localises to the cytoplasm. The catalysed reaction is an acyl-CoA + acetyl-CoA = a 3-oxoacyl-CoA + CoA. Its pathway is lipid metabolism; fatty acid beta-oxidation. Functionally, catalyzes the final step of fatty acid oxidation in which acetyl-CoA is released and the CoA ester of a fatty acid two carbons shorter is formed. This is 3-ketoacyl-CoA thiolase from Salmonella paratyphi A (strain ATCC 9150 / SARB42).